We begin with the raw amino-acid sequence, 66 residues long: Large ribosomal subunit protein bL31 (66 aa).

Cysteine 16, cysteine 18, cysteine 36, and cysteine 39 together coordinate Zn(2+).

Belongs to the bacterial ribosomal protein bL31 family. Type A subfamily. As to quaternary structure, part of the 50S ribosomal subunit. It depends on Zn(2+) as a cofactor.

Functionally, binds the 23S rRNA. The protein is Large ribosomal subunit protein bL31 of Leptospira biflexa serovar Patoc (strain Patoc 1 / Ames).